The primary structure comprises 306 residues: Pantothenate kinase (306 aa).

90–97 (GSVAVGKS) lines the ATP pocket.

This sequence belongs to the prokaryotic pantothenate kinase family.

It is found in the cytoplasm. It carries out the reaction (R)-pantothenate + ATP = (R)-4'-phosphopantothenate + ADP + H(+). It functions in the pathway cofactor biosynthesis; coenzyme A biosynthesis; CoA from (R)-pantothenate: step 1/5. This Ligilactobacillus salivarius (strain UCC118) (Lactobacillus salivarius) protein is Pantothenate kinase.